The following is a 269-amino-acid chain: Formamidopyrimidine-DNA glycosylase (269 aa).

The Schiff-base intermediate with DNA role is filled by Pro-2. Glu-3 functions as the Proton donor in the catalytic mechanism. Residue Lys-57 is the Proton donor; for beta-elimination activity of the active site. Residues His-90, Arg-109, and Lys-150 each contribute to the DNA site. Residues 235–269 (QVYGRKGEPCRVCGTPIVATKHAQRATFYCRQCQK) form an FPG-type zinc finger. The active-site Proton donor; for delta-elimination activity is the Arg-259.

This sequence belongs to the FPG family. Monomer. Zn(2+) serves as cofactor.

It carries out the reaction Hydrolysis of DNA containing ring-opened 7-methylguanine residues, releasing 2,6-diamino-4-hydroxy-5-(N-methyl)formamidopyrimidine.. It catalyses the reaction 2'-deoxyribonucleotide-(2'-deoxyribose 5'-phosphate)-2'-deoxyribonucleotide-DNA = a 3'-end 2'-deoxyribonucleotide-(2,3-dehydro-2,3-deoxyribose 5'-phosphate)-DNA + a 5'-end 5'-phospho-2'-deoxyribonucleoside-DNA + H(+). Functionally, involved in base excision repair of DNA damaged by oxidation or by mutagenic agents. Acts as a DNA glycosylase that recognizes and removes damaged bases. Has a preference for oxidized purines, such as 7,8-dihydro-8-oxoguanine (8-oxoG). Has AP (apurinic/apyrimidinic) lyase activity and introduces nicks in the DNA strand. Cleaves the DNA backbone by beta-delta elimination to generate a single-strand break at the site of the removed base with both 3'- and 5'-phosphates. This Escherichia coli O7:K1 (strain IAI39 / ExPEC) protein is Formamidopyrimidine-DNA glycosylase.